The primary structure comprises 254 residues: Imidazole glycerol phosphate synthase subunit HisF (254 aa).

Catalysis depends on residues D11 and D130.

It belongs to the HisA/HisF family. As to quaternary structure, heterodimer of HisH and HisF.

It is found in the cytoplasm. The enzyme catalyses 5-[(5-phospho-1-deoxy-D-ribulos-1-ylimino)methylamino]-1-(5-phospho-beta-D-ribosyl)imidazole-4-carboxamide + L-glutamine = D-erythro-1-(imidazol-4-yl)glycerol 3-phosphate + 5-amino-1-(5-phospho-beta-D-ribosyl)imidazole-4-carboxamide + L-glutamate + H(+). It participates in amino-acid biosynthesis; L-histidine biosynthesis; L-histidine from 5-phospho-alpha-D-ribose 1-diphosphate: step 5/9. Its function is as follows. IGPS catalyzes the conversion of PRFAR and glutamine to IGP, AICAR and glutamate. The HisF subunit catalyzes the cyclization activity that produces IGP and AICAR from PRFAR using the ammonia provided by the HisH subunit. The protein is Imidazole glycerol phosphate synthase subunit HisF of Gloeobacter violaceus (strain ATCC 29082 / PCC 7421).